The sequence spans 164 residues: Probable ubiquitin-conjugating enzyme E2 7 (164 aa).

The 161-residue stretch at 3-163 folds into the UBC core domain; that stretch reads QSSLLLKKQL…VAQCVRRSQE (161 aa). The active-site Glycyl thioester intermediate is Cys-88.

Belongs to the ubiquitin-conjugating enzyme family.

The catalysed reaction is S-ubiquitinyl-[E1 ubiquitin-activating enzyme]-L-cysteine + [E2 ubiquitin-conjugating enzyme]-L-cysteine = [E1 ubiquitin-activating enzyme]-L-cysteine + S-ubiquitinyl-[E2 ubiquitin-conjugating enzyme]-L-cysteine.. It participates in protein modification; protein ubiquitination. Functionally, catalyzes the covalent attachment of ubiquitin to other proteins. This chain is Probable ubiquitin-conjugating enzyme E2 7 (ubc-7), found in Caenorhabditis elegans.